The following is a 138-amino-acid chain: Small ribosomal subunit protein uS11c (138 aa).

The segment at 1–23 (MAKAIPRVGSRKNGRISSRKSAR) is disordered. Positions 9-23 (GSRKNGRISSRKSAR) are enriched in basic residues.

The protein belongs to the universal ribosomal protein uS11 family. In terms of assembly, part of the 30S ribosomal subunit.

The protein resides in the plastid. The protein localises to the chloroplast. The chain is Small ribosomal subunit protein uS11c from Coffea arabica (Arabian coffee).